The primary structure comprises 345 residues: Ubiquitin-associated domain-containing protein 2 (345 aa).

A signal peptide spans 1-39 (MFTSTGSSGLYKAPLSKSLLLVPSALSLLLTLLLPHCQK). The Extracellular segment spans residues 40 to 91 (FFVYDLHAVKHDLQIWRLICGRIICLDLKDAFCSGLLIYNFRIFERRYGSRK). A helical membrane pass occupies residues 92–112 (FASFLLGSWVLSALFDFILVE). Topologically, residues 113–125 (AVQYSLGVTVASN) are cytoplasmic. The chain crosses the membrane as a helical span at residues 126–146 (LPSGFLAPVFALFVPFHCSIP). The Extracellular portion of the chain corresponds to 147 to 163 (RVQVAQILGPLSITNKT). An N-linked (GlcNAc...) asparagine glycan is attached at Asn-161. Residues 164-184 (LIYILGLQLFTSGSYIWIVAM) form a helical membrane-spanning segment. Residues 185–345 (SGLISGMCYD…NVATNFLLQH (161 aa)) are Cytoplasmic-facing. The tract at residues 287 to 306 (NINYQDGPRSEQRASPPLEV) is disordered. A UBA domain is found at 305-345 (EVSEEQVARLMEMGFSRGDALEALRASNNDLNVATNFLLQH).

Interacts with LMBR1L, FAF2, AMFR and VCP.

The protein localises to the endoplasmic reticulum membrane. Restricts trafficking of FAF2 from the endoplasmic reticulum to lipid droplets. In association with LMBR1L and E3 ubiquitin-protein ligase AMFR, negatively regulates the canonical Wnt signaling pathway in the lymphocytes by promoting the ubiquitin-mediated degradation of CTNNB1 and Wnt receptors FZD6 and LRP6. This Mus musculus (Mouse) protein is Ubiquitin-associated domain-containing protein 2 (Ubac2).